Here is a 692-residue protein sequence, read N- to C-terminus: Junctophilin-2 (692 aa).

The Cytoplasmic portion of the chain corresponds to 1–670 (MSGGRFDFDD…EVEVEEVPNT (670 aa)). MORN repeat units follow at residues 14-36 (YCGG…KGQG), 38-59 (YSGS…SGNT), 60-79 (FEGY…TKGR), 82-104 (YKGE…NSGA), 106-128 (YEGT…DGGT), and 129-151 (YQGQ…PYGM). A phosphoserine mark is found at serine 162 and serine 165. 2 disordered regions span residues 164–190 (SSLR…LPLP) and 246–273 (LSSG…AAPF). 2 MORN repeats span residues 285 to 307 (YMGE…SGLR) and 308 to 330 (YEGE…DGHR). The Bipartite nuclear localization signal signature appears at 345 to 359 (KRRVLPLKSNKVRQK). A disordered region spans residues 439–661 (NSESLLEPRE…KEVAQEAEAE (223 aa)). 3 positions are modified to phosphoserine: serine 440, serine 442, and serine 462. Over residues 457 to 471 (ERPRESPQLHERETP) the composition is skewed to basic and acidic residues. The residue at position 470 (threonine 470) is a Phosphothreonine. Residues 474 to 487 (EGGPPSPAGTPPQP) show a composition bias toward pro residues. Serine 479 is subject to Phosphoserine. Residue threonine 483 is modified to Phosphothreonine. The Nuclear localization signal motif lies at 488 to 492 (KRPRP). Serine 527 and serine 533 each carry phosphoserine. The span at 573–582 (PLEDEPEPEP) shows a compositional bias: acidic residues. Serine 589, serine 593, serine 604, and serine 609 each carry phosphoserine. Residues 627–640 (AEPKAKARKTEARG) show a composition bias toward basic and acidic residues. A helical; Anchor for type IV membrane protein membrane pass occupies residues 671-691 (VLICMVILLNIGLAILFVHLL).

It belongs to the junctophilin family. As to quaternary structure, interacts with TRPC3. Interacts with BAG5 and HSPA8; the interaction with HSPA8 is increased in the presence of BAG5. Junctophilin-2 N-terminal fragment: Interacts with MEF2C. In terms of processing, proteolytically cleaved by calpain in response to cardiac stress. The major cleavage site takes place at the C-terminus and leads to the release of the Junctophilin-2 N-terminal fragment chain (JP2NT). Phosphorylation on Ser-165, probably by PKC, affects RYR1-mediated calcium ion release, interaction with TRPC3, and skeletal muscle myotubule development.

It localises to the cell membrane. The protein resides in the sarcoplasmic reticulum membrane. Its subcellular location is the endoplasmic reticulum membrane. The protein localises to the nucleus. In terms of biological role, membrane-binding protein that provides a structural bridge between the plasma membrane and the sarcoplasmic reticulum and is required for normal excitation-contraction coupling in cardiomyocytes. Provides a structural foundation for functional cross-talk between the cell surface and intracellular Ca(2+) release channels by maintaining the 12-15 nm gap between the sarcolemma and the sarcoplasmic reticulum membranes in the cardiac dyads. Necessary for proper intracellular Ca(2+) signaling in cardiac myocytes via its involvement in ryanodine receptor-mediated calcium ion release. Contributes to the construction of skeletal muscle triad junctions. Functionally, transcription repressor required to safeguard against the deleterious effects of cardiac stress. Generated following cleavage of the Junctophilin-2 chain by calpain in response to cardiac stress in cardiomyocytes. Following cleavage and release from the membrane, translocates to the nucleus, binds DNA and represses expression of genes implicated in cell growth and differentiation, hypertrophy, inflammation and fibrosis. Modifies the transcription profile and thereby attenuates pathological remodeling in response to cardiac stress. Probably acts by competing with MEF2 transcription factors and TATA-binding proteins. The polypeptide is Junctophilin-2 (Rattus norvegicus (Rat)).